A 488-amino-acid polypeptide reads, in one-letter code: Protein nucleotidyltransferase YdiU (488 aa).

The ATP site is built by Gly91, Gly93, Arg94, Lys114, Asp126, Gly127, Arg177, and Arg184. The active-site Proton acceptor is Asp253. Mg(2+) contacts are provided by Asn254 and Asp263. Asp263 is a binding site for ATP.

The protein belongs to the SELO family. It depends on Mg(2+) as a cofactor. Mn(2+) serves as cofactor.

The catalysed reaction is L-seryl-[protein] + ATP = 3-O-(5'-adenylyl)-L-seryl-[protein] + diphosphate. It catalyses the reaction L-threonyl-[protein] + ATP = 3-O-(5'-adenylyl)-L-threonyl-[protein] + diphosphate. The enzyme catalyses L-tyrosyl-[protein] + ATP = O-(5'-adenylyl)-L-tyrosyl-[protein] + diphosphate. It carries out the reaction L-histidyl-[protein] + UTP = N(tele)-(5'-uridylyl)-L-histidyl-[protein] + diphosphate. The catalysed reaction is L-seryl-[protein] + UTP = O-(5'-uridylyl)-L-seryl-[protein] + diphosphate. It catalyses the reaction L-tyrosyl-[protein] + UTP = O-(5'-uridylyl)-L-tyrosyl-[protein] + diphosphate. Functionally, nucleotidyltransferase involved in the post-translational modification of proteins. It can catalyze the addition of adenosine monophosphate (AMP) or uridine monophosphate (UMP) to a protein, resulting in modifications known as AMPylation and UMPylation. The protein is Protein nucleotidyltransferase YdiU of Bacillus cereus (strain B4264).